A 185-amino-acid polypeptide reads, in one-letter code: Probable RNA 2'-phosphotransferase (185 aa).

It belongs to the KptA/TPT1 family.

Functionally, removes the 2'-phosphate from RNA via an intermediate in which the phosphate is ADP-ribosylated by NAD followed by a presumed transesterification to release the RNA and generate ADP-ribose 1''-2''-cyclic phosphate (APPR&gt;P). May function as an ADP-ribosylase. In Rhizobium rhizogenes (strain K84 / ATCC BAA-868) (Agrobacterium radiobacter), this protein is Probable RNA 2'-phosphotransferase.